Here is a 324-residue protein sequence, read N- to C-terminus: Serpentine receptor class gamma-10 (324 aa).

8 consecutive transmembrane segments (helical) span residues Ser-39–Gly-59, Met-69–Gly-89, Ile-91–Ile-111, Thr-128–Met-146, Ile-155–Leu-175, Leu-206–Gly-226, Met-246–Ala-266, and Ile-279–Ser-299.

This sequence belongs to the nematode receptor-like protein srg family.

It localises to the membrane. This Caenorhabditis elegans protein is Serpentine receptor class gamma-10 (srg-10).